Consider the following 225-residue polypeptide: Transmembrane protein 40 (225 aa).

Met1 carries the post-translational modification N-acetylmethionine. Low complexity predominate over residues 1-14 (MEASGSSSQSQDSG). A disordered region spans residues 1-96 (MEASGSSSQS…RRDSLRGADH (96 aa)). Residues 15–29 (GVHRETEDHYQETEL) are compositionally biased toward basic and acidic residues. Residues 30–39 (HKHHGKARER) are compositionally biased toward basic residues. Residues 46–68 (SSSSSSSSSSSSSSSSSSSSSSD) are compositionally biased toward low complexity. Over residues 78–87 (GPRKHRRRPR) the composition is skewed to basic residues. Ser129 is subject to Phosphoserine. 2 helical membrane passes run 152–172 (FFHF…YHYY) and 179–199 (LGVG…FGLV).

Its subcellular location is the membrane. In Mus musculus (Mouse), this protein is Transmembrane protein 40 (Tmem40).